The following is a 65-amino-acid chain: Neurotoxin Bot2 (65 aa).

Residues 2 to 64 form the LCN-type CS-alpha/beta domain; it reads RDAYIAQPEN…VPIRIEGKCH (63 aa). 4 disulfides stabilise this stretch: C12-C63, C16-C36, C22-C46, and C26-C48. F65 is modified (phenylalanine amide).

Belongs to the long (4 C-C) scorpion toxin superfamily. Sodium channel inhibitor family. Alpha subfamily. As to expression, expressed by the venom gland.

Its subcellular location is the secreted. Its function is as follows. Binds to sodium channels (Nav) and inhibits the inactivation of the activated channels, thereby blocking neuronal transmission. This chain is Neurotoxin Bot2, found in Buthus occitanus tunetanus (Common European scorpion).